The following is a 488-amino-acid chain: DELTA-alicitoxin-Pse2b (488 aa).

The signal sequence occupies residues 1-21 (MSKPIIFLLTAFVVLTDLGAT). Residues 24 to 344 (TEKVEVKAKP…GYLNFDCAYE (321 aa)) form the MACPF domain. The region spanning 369 to 398 (VCKLGPEGCHSDDDCESDDLIYCACCGDSC) is the EGF-like domain. 3 disulfide bridges follow: Cys-370/Cys-383, Cys-377/Cys-391, and Cys-393/Cys-398.

The protein localises to the secreted. Its subcellular location is the nematocyst. Functionally, causes lethal toxicity to the shrimp Palaemon paucidence, and hemolytic activity toward sheep red blood cells. The protein is DELTA-alicitoxin-Pse2b of Phyllodiscus semoni (Night anemone).